The primary structure comprises 168 residues: Fusion protein P6 (168 aa).

4 consecutive transmembrane segments (helical) span residues 29 to 49 (IWPL…AGFF), 52 to 72 (AGFT…TPTL), 94 to 114 (FQSL…ALIA), and 143 to 163 (ALPG…LWPS).

As to quaternary structure, interacts with P3.

The protein resides in the virion membrane. Its function is as follows. Mediates the fusion with the host outer membrane during virus entry into the host cell. This Pseudomonas savastanoi pv. phaseolicola (Pseudomonas syringae pv. phaseolicola) protein is Fusion protein P6 (P6).